The primary structure comprises 121 residues: Trypsin/alpha-amylase inhibitor CMX1/CMX3 (121 aa).

The first 24 residues, 1–24 (MAFKHQLILSTAILLAVLAAASAS), serve as a signal peptide directing secretion.

It belongs to the protease inhibitor I6 (cereal trypsin/alpha-amylase inhibitor) family.

It is found in the secreted. The polypeptide is Trypsin/alpha-amylase inhibitor CMX1/CMX3 (Triticum aestivum (Wheat)).